The sequence spans 335 residues: Methionine aminopeptidase 1D, mitochondrial (335 aa).

The N-terminal 19 residues, 1-19 (MAAPSGVHLLVRRGSHRIF), are a transit peptide targeting the mitochondrion. H161 provides a ligand contact to substrate. The a divalent metal cation site is built by D178, D189, and H252. H259 serves as a coordination point for substrate. E284 and E315 together coordinate a divalent metal cation.

It belongs to the peptidase M24A family. Methionine aminopeptidase type 1 subfamily. Co(2+) is required as a cofactor. Zn(2+) serves as cofactor. The cofactor is Mn(2+). Requires Fe(2+) as cofactor. Overexpressed in colon cancer cell lines and colon tumors as compared to normal tissues (at protein level).

Its subcellular location is the mitochondrion. The catalysed reaction is Release of N-terminal amino acids, preferentially methionine, from peptides and arylamides.. Its function is as follows. Removes the N-terminal methionine from nascent proteins. The N-terminal methionine is often cleaved when the second residue in the primary sequence is small and uncharged (Met-Ala-, Cys, Gly, Pro, Ser, Thr, or Val). Requires deformylation of the N(alpha)-formylated initiator methionine before it can be hydrolyzed. May play a role in colon tumorigenesis. The polypeptide is Methionine aminopeptidase 1D, mitochondrial (METAP1D) (Homo sapiens (Human)).